The chain runs to 708 residues: Nicastrin (708 aa).

The N-terminal stretch at 1-34 (MATARGGSGPDPGSRGLLLLSFSVVLAGLCGGNS) is a signal peptide. The Lumenal segment spans residues 35 to 668 (VERKIYIPLN…IFLIASKELE (634 aa)). N-linked (GlcNAc...) asparagine glycans are attached at residues Asn44, Asn54, and Asn128. Cys49 and Cys61 form a disulfide bridge. Cys139 and Cys158 form a disulfide bridge. Residues Asn186 and Asn203 are each glycosylated (N-linked (GlcNAc...) asparagine). Disulfide bonds link Cys194–Cys212 and Cys229–Cys247. N-linked (GlcNAc...) asparagine glycans are attached at residues Asn263, Asn386, Asn434, Asn463, Asn507, Asn529, Asn561, Asn572, Asn579, Asn593, and Asn611. Residues Cys585 and Cys619 are joined by a disulfide bond. The chain crosses the membrane as a helical span at residues 669–689 (FITLIVGFSILVFSLIVTYCI). The Cytoplasmic portion of the chain corresponds to 690–708 (NAKADVLFVAPREPGAVSY).

This sequence belongs to the nicastrin family. Component of the gamma-secretase complex. The functional gamma-secretase complex is composed of at least four polypeptides: a presenilin homodimer (PSEN1 or PSEN2), nicastrin (NCSTN), APH1 (APH1A or APH1B) and PEN2. Binds to proteolytic processed C-terminal fragments C83 and C99 of the amyloid precursor protein (APP). Interacts with PSEN1 and PSEN2. In terms of processing, N-glycosylated.

The protein resides in the membrane. It localises to the cytoplasmic vesicle membrane. It is found in the melanosome. Its function is as follows. Essential subunit of the gamma-secretase complex, an endoprotease complex that catalyzes the intramembrane cleavage of integral membrane proteins such as Notch receptors and APP (amyloid-beta precursor protein). The gamma-secretase complex plays a role in Notch and Wnt signaling cascades and regulation of downstream processes via its role in processing key regulatory proteins, and by regulating cytosolic CTNNB1 levels. This Rattus norvegicus (Rat) protein is Nicastrin (Ncstn).